Reading from the N-terminus, the 379-residue chain is MRPTRAEVNLAHLRHNLRVLERGLTGATKPQIWGVLKADAYGHGAPAVARTLERAGIPGLCVALLEEAIELRDAGIRLPILVMGGYYGPRRDGFEEIIARDLVPVVYDAGQIERLASVVRLEQRGRVGVHLKVDTGMGRLGAASSEIEAVLATLAKHPEVKLDGLMTHLACADADDLGVTIEQMRLFGEIEQRAKSFGLTPRVRHASNSAAMLRLPAALLDIVRPGVALFGISPCAGLAPDLKPVIRVRSEIVALRTIAKGDRIGYGHTWQASRESVVATVPMGYADGLSRQLSNRGAALVRGQRAPIAGAVSMDLTMLDVTDVPGARLGDEVVFLGTQDGPLGRGTISAEEIAGLTGTIAWEVLTSISRRVPRFYREP.

The Proton acceptor; specific for D-alanine role is filled by Lys37. N6-(pyridoxal phosphate)lysine is present on Lys37. Position 139 (Arg139) interacts with substrate. Tyr266 acts as the Proton acceptor; specific for L-alanine in catalysis. Met314 lines the substrate pocket.

This sequence belongs to the alanine racemase family. Requires pyridoxal 5'-phosphate as cofactor.

The catalysed reaction is L-alanine = D-alanine. Its pathway is amino-acid biosynthesis; D-alanine biosynthesis; D-alanine from L-alanine: step 1/1. Functionally, catalyzes the interconversion of L-alanine and D-alanine. May also act on other amino acids. This chain is Alanine racemase (alr), found in Sorangium cellulosum (strain So ce56) (Polyangium cellulosum (strain So ce56)).